Reading from the N-terminus, the 72-residue chain is Conotoxin LiC53 (72 aa).

Residues 1–23 (MEKLTSLLLVAALLMLTQTLIQG) form the signal peptide. Residues 24 to 41 (GGEDRPNKKFLQKIKSTA) constitute a propeptide that is removed on maturation. 3 disulfide bridges follow: Cys45/Cys59, Cys52/Cys63, and Cys58/Cys68.

It belongs to the conotoxin O2 superfamily. Expressed by the venom duct.

The protein localises to the secreted. The protein is Conotoxin LiC53 of Conus lividus (Livid cone).